A 669-amino-acid chain; its full sequence is Threonine--tRNA ligase (669 aa).

The TGS domain maps to 3-60; it reads DAQQITLLVDGEETKVTTGTTGAELFFERRDVVVARVNGELKDLDQELPEGAEVEGVT. Residues 260-566 are catalytic; the sequence is DHRKLGSELD…LTEHYAGAFP (307 aa). Residues C365, H416, and H543 each contribute to the Zn(2+) site.

The protein belongs to the class-II aminoacyl-tRNA synthetase family. As to quaternary structure, homodimer. Requires Zn(2+) as cofactor.

It is found in the cytoplasm. The enzyme catalyses tRNA(Thr) + L-threonine + ATP = L-threonyl-tRNA(Thr) + AMP + diphosphate + H(+). Catalyzes the attachment of threonine to tRNA(Thr) in a two-step reaction: L-threonine is first activated by ATP to form Thr-AMP and then transferred to the acceptor end of tRNA(Thr). Also edits incorrectly charged L-seryl-tRNA(Thr). This chain is Threonine--tRNA ligase, found in Pseudarthrobacter chlorophenolicus (strain ATCC 700700 / DSM 12829 / CIP 107037 / JCM 12360 / KCTC 9906 / NCIMB 13794 / A6) (Arthrobacter chlorophenolicus).